The chain runs to 1828 residues: Microtubule-associated protein 2 (1828 aa).

The segment covering 1-11 has biased composition (basic and acidic residues); the sequence is MADERKDEGKA. 3 disordered regions span residues 1 to 86, 109 to 379, and 397 to 490; these read MADE…DRET, EQEK…DKVA, and VVEG…HTID. The residue at position 28 (Ser-28) is a Phosphoserine. The segment covering 109 to 119 has biased composition (basic and acidic residues); the sequence is EQEKEAQHKDQ. A compositionally biased stretch (low complexity) spans 120 to 133; that stretch reads PAALPLAAEETANL. Phosphoserine occurs at positions 136, 140, and 143. 3 stretches are compositionally biased toward basic and acidic residues: residues 174-194, 205-218, and 256-276; these read PLDKGEMEFKMPSKPGEDFEH, PQDKKDLQGMEGEK, and APKEPKDWFIEMPTESKKDEW. Ser-283 bears the Phosphoserine mark. The span at 290-306 shows a compositional bias: basic and acidic residues; sequence MREKDVLEDIPRWEGKQ. Ser-333 and Ser-346 each carry phosphoserine. 3 stretches are compositionally biased toward basic and acidic residues: residues 363-379, 412-421, and 451-466; these read ESSKDEEPLKDKADKVA, VTTDQEKKET, and AVAKKEESFKLRDDKT. Residue Ser-476 is modified to Phosphoserine. The segment covering 477 to 490 has biased composition (basic and acidic residues); sequence FSKEDQKGQEHTID. Residues Ser-496, Ser-520, Ser-550, Ser-596, Ser-599, Ser-603, Ser-608, and Ser-626 each carry the phosphoserine modification. The tract at residues 573 to 684 is disordered; it reads TSALKEDMTR…HSKNKDDLTL (112 aa). Residues 596 to 610 show a composition bias toward polar residues; it reads SRGSAQESLDTISPK. Basic and acidic residues predominate over residues 667-683; the sequence is VYGEKRDLHSKNKDDLT. The tract at residues 702-745 is interaction with KNDC1; sequence SINLPMSCLDSIALGFNFGRGHDLSPLASDILTNTSGSMDEGDD. Phosphoserine is present on residues Ser-726 and Ser-730. Position 734 is a phosphothreonine (Thr-734). Ser-737 and Ser-739 each carry phosphoserine. Tyr-746 carries the post-translational modification Phosphotyrosine. 2 disordered regions span residues 765–794 and 823–863; these read KEEEDKAEQAKVTGGQTIQVETSSESPFPA and SVSA…VKPD. Positions 778-790 are enriched in polar residues; that stretch reads GGQTIQVETSSES. Ser-823, Ser-883, Ser-892, and Ser-938 each carry phosphoserine. Disordered regions lie at residues 930 to 986 and 1005 to 1044; these read EFTA…EEMG and ELITTKDTSPEKTEKGLSSVPEVAEVEPTTKADQGLDFAA. Residues 944 to 986 are compositionally biased toward basic and acidic residues; that stretch reads DKSRLSREFDHDRKANDKLDTVLEKSEEHIDSKEHAKESEEMG. Phosphoserine occurs at positions 1050, 1139, 1140, and 1145. Disordered stretches follow at residues 1087 to 1165, 1206 to 1228, 1304 to 1373, and 1405 to 1640; these read SSEA…PETS, PKEESTETPDIPAIPSDVTQPQP, TTDE…KTET, and LTEQ…ILVP. The segment covering 1103–1161 has biased composition (basic and acidic residues); that stretch reads GHIKEGGKVNETEVKEKVTKPDLVHQEAVDKEESYESSGEHESLTMESLKPDEGKKETS. A Phosphothreonine modification is found at Thr-1160. A phosphoserine mark is found at Ser-1161 and Ser-1165. A compositionally biased stretch (basic and acidic residues) spans 1324–1333; the sequence is EEERRPRPHD. Ser-1352 carries the post-translational modification Phosphoserine. A Phosphothreonine modification is found at Thr-1358. 2 stretches are compositionally biased toward basic and acidic residues: residues 1359-1373 and 1412-1430; these read PEKEEVAFSEYKTET and IPKEERAEKDARRPSLEKH. The segment covering 1431–1440 has biased composition (basic residues); the sequence is RKEKPFKTGR. 3 stretches are compositionally biased toward basic and acidic residues: residues 1445–1464, 1471–1481, and 1527–1544; these read TPERKVAKKEPSTVSRDEVR, KKAELAKKSEV, and QAKDKVTDGISKSPEKRS. The segment at 1452–1472 is calmodulin-binding; the sequence is KKEPSTVSRDEVRRKKAVYKK. Position 1539 is a phosphoserine (Ser-1539). A compositionally biased stretch (low complexity) spans 1546 to 1557; that stretch reads LPRPSSILPPRR. Residue Ser-1560 is modified to Phosphoserine. Composition is skewed to low complexity over residues 1567-1578 and 1591-1607; these read SFSLNSSISSAR and KSGTSTPTTPGSTAITP. Ser-1592 is subject to Phosphoserine. A phosphothreonine mark is found at Thr-1606, Thr-1609, Thr-1620, Thr-1623, and Thr-1650. Positions 1613 to 1623 are enriched in polar residues; that stretch reads YSSRTPGTPGT. At Ser-1654 the chain carries Phosphoserine. Tau/MAP repeat units follow at residues 1662 to 1692, 1693 to 1723, and 1724 to 1755; these read RLINQPLPDLKNVKSKIGSTDNIKYQPKGGQ, VQIVTKKIDLSHVTSKCGSLKNIRHRPGGGR, and VKIESVKLDFKEKAQAKVGSLDNAHHVPGGGN. Phosphoserine; by MARK1 is present on Ser-1680. Residues 1778-1802 are disordered; the sequence is EIITQSPSRSSVASPRRLSNVSSSG. Phosphoserine is present on residues Ser-1783, Ser-1788, Ser-1791, Ser-1796, and Ser-1809. A compositionally biased stretch (low complexity) spans 1783 to 1796; it reads SPSRSSVASPRRLS.

Interacts with KNDC1 (via KIND2); the interaction enhances MAP2 phosphorylation and localizes KNDC1 to dendrites. Interacts with DPYSL5. In terms of processing, phosphorylated at serine residues in K-X-G-S motifs by causing MAP/microtubule affinity-regulating kinase (MARK1 or MARK2), detachment from microtubules, and their disassembly. The interaction with KNDC1 enhances MAP2 threonine phosphorylation.

It localises to the cytoplasm. The protein localises to the cytoskeleton. Its subcellular location is the cell projection. The protein resides in the dendrite. Its function is as follows. The exact function of MAP2 is unknown but MAPs may stabilize the microtubules against depolymerization. They also seem to have a stiffening effect on microtubules. In Mus musculus (Mouse), this protein is Microtubule-associated protein 2 (Map2).